Here is a 234-residue protein sequence, read N- to C-terminus: Leucyl/phenylalanyl-tRNA--protein transferase (234 aa).

Belongs to the L/F-transferase family.

The protein resides in the cytoplasm. The enzyme catalyses N-terminal L-lysyl-[protein] + L-leucyl-tRNA(Leu) = N-terminal L-leucyl-L-lysyl-[protein] + tRNA(Leu) + H(+). The catalysed reaction is N-terminal L-arginyl-[protein] + L-leucyl-tRNA(Leu) = N-terminal L-leucyl-L-arginyl-[protein] + tRNA(Leu) + H(+). It catalyses the reaction L-phenylalanyl-tRNA(Phe) + an N-terminal L-alpha-aminoacyl-[protein] = an N-terminal L-phenylalanyl-L-alpha-aminoacyl-[protein] + tRNA(Phe). Its function is as follows. Functions in the N-end rule pathway of protein degradation where it conjugates Leu, Phe and, less efficiently, Met from aminoacyl-tRNAs to the N-termini of proteins containing an N-terminal arginine or lysine. The protein is Leucyl/phenylalanyl-tRNA--protein transferase of Salmonella paratyphi A (strain ATCC 9150 / SARB42).